The following is a 515-amino-acid chain: Fatty acyl-CoA reductase 2 (515 aa).

The Cytoplasmic segment spans residues 1 to 465; that stretch reads MSMIAAFYGG…AKQHLKRLRN (465 aa). A helical membrane pass occupies residues 466–484; that stretch reads IHYLFNTALFLIAWRLLIA. Residues 485–515 lie on the Peroxisomal side of the membrane; sequence RSQVARNVWFFIVSFCYKFLSYFRASSTLNV.

This sequence belongs to the fatty acyl-CoA reductase family.

The protein resides in the peroxisome membrane. It catalyses the reaction a long-chain fatty acyl-CoA + 2 NADPH + 2 H(+) = a long-chain primary fatty alcohol + 2 NADP(+) + CoA. It carries out the reaction hexadecanoyl-CoA + 2 NADPH + 2 H(+) = hexadecan-1-ol + 2 NADP(+) + CoA. The enzyme catalyses octadecanoyl-CoA + 2 NADPH + 2 H(+) = octadecan-1-ol + 2 NADP(+) + CoA. The catalysed reaction is a very long-chain fatty acyl-CoA + 2 NADPH + 2 H(+) = a very long-chain primary fatty alcohol + 2 NADP(+) + CoA. It catalyses the reaction an ultra-long-chain fatty acyl-CoA + 2 NADPH + 2 H(+) = an ultra long-chain primary fatty alcohol + 2 NADP(+) + CoA. It carries out the reaction eicosanoyl-CoA + 2 NADPH + 2 H(+) = eicosan-1-ol + 2 NADP(+) + CoA. The enzyme catalyses docosanoyl-CoA + 2 NADPH + 2 H(+) = docosan-1-ol + 2 NADP(+) + CoA. The catalysed reaction is tetracosanoyl-CoA + 2 NADPH + 2 H(+) = tetracosan-1-ol + 2 NADP(+) + CoA. It catalyses the reaction hexacosanoyl-CoA + 2 NADPH + 2 H(+) = hexacosan-1-ol + 2 NADP(+) + CoA. It carries out the reaction octacosanoyl-CoA + 2 NADPH + 2 H(+) = octacosan-1-ol + 2 NADP(+) + CoA. The enzyme catalyses triacontanoyl-CoA + 2 NADPH + 2 H(+) = triacontan-1-ol + 2 NADP(+) + CoA. The catalysed reaction is 18-methylnonadecanoyl-CoA + 2 NADPH + 2 H(+) = 18-methylnonadecan-1-ol + 2 NADP(+) + CoA. It catalyses the reaction 20-methylheneicosanoyl-CoA + 2 NADPH + 2 H(+) = 20-methylheneicosan-1-ol + 2 NADP(+) + CoA. It carries out the reaction 22-methyltricosanoyl-CoA + 2 NADPH + 2 H(+) = 22-methyltricosan-1-ol + 2 NADP(+) + CoA. The enzyme catalyses 24-methylpentacosanoyl-CoA + 2 NADPH + 2 H(+) = 24-methylpentacosan-1-ol + 2 NADP(+) + CoA. Its function is as follows. Catalyzes the reduction of saturated but not unsaturated C16 or C18 fatty acyl-CoA to fatty alcohols (FAls). A lower activity can be observed with shorter fatty acyl-CoA substrates. Can produce very long-chain and ultra long-chain FAls, regardless of whether they have a straight or branched chain. Involved in the production of ether lipids/plasmalogens and wax monoesters whose synthesis requires FAls as substrates. This Bos taurus (Bovine) protein is Fatty acyl-CoA reductase 2.